The primary structure comprises 814 residues: Phenylalanine--tRNA ligase beta subunit (814 aa).

Residues 39-153 enclose the tRNA-binding domain; sequence SKNVNGVVLG…LKHELGTPVS (115 aa). Residues 414–500 enclose the B5 domain; it reads NEDIFIKLRR…RLIGYDRFDL (87 aa). Positions 478, 484, 487, and 488 each coordinate Mg(2+). The region spanning 720-813 is the FDX-ACB domain; the sequence is PIVPKIERDI…IEKSFQTKLR (94 aa).

It belongs to the phenylalanyl-tRNA synthetase beta subunit family. Type 1 subfamily. As to quaternary structure, tetramer of two alpha and two beta subunits. Requires Mg(2+) as cofactor.

It localises to the cytoplasm. It catalyses the reaction tRNA(Phe) + L-phenylalanine + ATP = L-phenylalanyl-tRNA(Phe) + AMP + diphosphate + H(+). The chain is Phenylalanine--tRNA ligase beta subunit from Prochlorococcus marinus (strain MIT 9312).